A 575-amino-acid polypeptide reads, in one-letter code: Serine/threonine-protein kinase Pink1, mitochondrial (575 aa).

A mitochondrion-targeting transit peptide spans 1-51; sequence MSLLAYTNLLLQNGRIFRYYKKANIKKFIKKIIKLDLKSTPSEASVSRQTF. Residues 52–94 lie on the Mitochondrial intermembrane side of the membrane; sequence LSTGLNSVKNAVQLQARKLLINNVLERVTPTLNSDLKKKAAKR. The chain crosses the membrane as a helical span at residues 95–118; the sequence is LFYGDSAPFFALVGVSLASGSGLL. The Cytoplasmic segment spans residues 119–575; it reads TKDDELEGIC…KWIQELHIYN (457 aa). Lys-193 is a binding site for ATP. A phosphoserine; by autocatalysis mark is found at Ser-202 and Ser-204. Glu-214 is a Mg(2+) binding site. Phosphothreonine; by autocatalysis is present on Thr-305. The active-site Proton acceptor is the Asp-334. Residues Asn-339 and Asp-357 each coordinate Mg(2+).

It belongs to the protein kinase superfamily. Ser/Thr protein kinase family. The cofactor is Mg(2+). Post-translationally, proteolytically cleaved. In healthy cells, the precursor is continuously imported into mitochondria where it is proteolytically cleaved into its short form by the mitochondrial rhomboid protease rho-7 (8231301). The short form is then released into the cytosol where it rapidly undergoes proteasome-dependent degradation. In unhealthy cells, when cellular stress conditions lead to the loss of mitochondrial membrane potential, mitochondrial import is impaired leading to the precursor accumulating on the outer mitochondrial membrane (OMM). Autophosphorylated. Autophosphorylated on Ser-202, which activates kinase activity. Loss of mitochondrial membrane potential results in the precursor accumulating on the outer mitochondrial membrane (OMM) where it is activated by autophosphorylation at Ser-202. Autophosphorylation is sufficient and essential for selective recruitment of park to depolarized mitochondria, likely via Pink1-dependent phosphorylation of polyubiquitin chains. Also autophosphorylated at Ser-204 and Thr-305.

The protein localises to the mitochondrion outer membrane. It localises to the mitochondrion inner membrane. Its subcellular location is the cytoplasm. It is found in the cytosol. The catalysed reaction is L-seryl-[protein] + ATP = O-phospho-L-seryl-[protein] + ADP + H(+). The enzyme catalyses L-threonyl-[protein] + ATP = O-phospho-L-threonyl-[protein] + ADP + H(+). Acts as a serine/threonine-protein kinase. Exhibits a substrate preference for proline at position P+1 and a general preference at several residues for basic residues such as arginine. Also exhibits moderate preferences for a phosphotyrosine at position P-3 and a tryptophan at P-5. Critical to mitochondrial homeostasis it mediates several pathways that maintain mitochondrial health and function Protects against mitochondrial dysfunction during cellular stress by phosphorylating mitochondrial proteins such as park and likely Drp1, to coordinate mitochondrial quality control mechanisms that remove and replace dysfunctional mitochondrial components. Depending on the severity of mitochondrial damage and/or dysfunction, activity ranges from preventing apoptosis and stimulating mitochondrial biogenesis to regulating mitochondrial dynamics and eliminating severely damaged mitochondria via mitophagy. Appears to be particularly important in maintaining the physiology and function of cells with high energy demands that are undergoing stress or altered metabolic environment, including spermatids, muscle cells and neurons such as the dopaminergic (DA) neurons. Mediates the translocation and activation of park at the outer membrane (OMM) of dysfunctional/depolarized mitochondria. At the OMM of damaged mitochondria, phosphorylates pre-existing polyubiquitin chains, the Pink1-phosphorylated polyubiquitin then recruits park from the cytosol to the OMM where park is fully activated by phosphorylation at 'Ser-94' by Pink1. When cellular stress results in irreversible mitochondrial damage, functions with park to promote the clearance of dysfunctional and/or depolarized mitochondria by selective autophagy (mitophagy). The Pink1-park pathway also promotes fission and/or inhibits fusion of damaged mitochondria, by phosphorylating and thus promoting the park-dependent degradation of proteins involved in mitochondrial fusion/fission such as Marf, Opa1 and fzo. This prevents the refusion of unhealthy mitochondria with the mitochondrial network or initiates mitochondrial fragmentation facilitating their later engulfment by autophagosomes. Also likely to promote mitochondrial fission independently of park and Atg7-mediated mitophagy, via the phosphorylation and activation of Drp1. Regulates motility of damaged mitochondria by phosphorylating Miro which likely promotes its park-dependent degradation by the proteasome; in motor neurons, this inhibits mitochondrial intracellular anterograde transport along the axons which probably increases the chance of the mitochondria being eliminated in the soma. The Pink1-park pathway is also involved in mitochondrial regeneration processes such as promoting mitochondrial biogenesis, activating localized mitochondrial repair, promoting selective turnover of mitochondrial proteins and initiating the mitochondrial import of endogenous proteins. Involved in mitochondrial biogenesis by promoting the park-dependent ubiquitination of transcriptional repressor Paris which leads to its subsequent proteasomal degradation and allows activation of the transcription factor srl. Functions with park to promote localized mitochondrial repair by activating the translation of specific nuclear-encoded mitochondrial RNAs (nc-mtRNAs) on the mitochondrial surface, including several key electron transport chain component nc-mtRNAs. During oogenesis, phosphorylates and inactivates larp on the membrane of defective mitochondria, thus impairing local translation and mtDNA replication and consequently, reducing transmission of deleterious mtDNA mutations to the mature oocyte. Phosphorylates the mitochondrial acyl-CoA dehydrogenase Mcad, and appears to be important for maintaining fatty acid and amino acid metabolism via a mechanism that is independent of it's role in maintaining production of ATP. The chain is Serine/threonine-protein kinase Pink1, mitochondrial from Pediculus humanus subsp. corporis (Body louse).